Here is a 270-residue protein sequence, read N- to C-terminus: Sulfur carrier protein FdhD (270 aa).

2 stretches are compositionally biased toward basic and acidic residues: residues 1-10 and 20-30; these read MSMQDHDRTE and RHLDGSSRPDW. The interval 1–30 is disordered; sequence MSMQDHDRTEQGMTSLAVTRHLDGSSRPDW. Cys-117 acts as the Cysteine persulfide intermediate in catalysis.

It belongs to the FdhD family.

The protein localises to the cytoplasm. Its function is as follows. Required for formate dehydrogenase (FDH) activity. Acts as a sulfur carrier protein that transfers sulfur from IscS to the molybdenum cofactor prior to its insertion into FDH. This chain is Sulfur carrier protein FdhD, found in Chromobacterium violaceum (strain ATCC 12472 / DSM 30191 / JCM 1249 / CCUG 213 / NBRC 12614 / NCIMB 9131 / NCTC 9757 / MK).